A 377-amino-acid polypeptide reads, in one-letter code: Alanine racemase (377 aa).

Lys-35 functions as the Proton acceptor; specific for D-alanine in the catalytic mechanism. Lys-35 is modified (N6-(pyridoxal phosphate)lysine). Arg-130 serves as a coordination point for substrate. The active-site Proton acceptor; specific for L-alanine is Tyr-260. Met-312 serves as a coordination point for substrate.

Belongs to the alanine racemase family. The cofactor is pyridoxal 5'-phosphate.

It catalyses the reaction L-alanine = D-alanine. It participates in amino-acid biosynthesis; D-alanine biosynthesis; D-alanine from L-alanine: step 1/1. Functionally, catalyzes the interconversion of L-alanine and D-alanine. May also act on other amino acids. The protein is Alanine racemase (alr) of Leptothrix cholodnii (strain ATCC 51168 / LMG 8142 / SP-6) (Leptothrix discophora (strain SP-6)).